A 254-amino-acid polypeptide reads, in one-letter code: Citrate synthase-lysine N-methyltransferase CSKMT, mitochondrial (254 aa).

Residues 1–45 (MLLNRFLVPLRSLQKLTQARRWHQTSLINDLVVNMDKKAMWDRFY) constitute a mitochondrion transit peptide.

Belongs to the methyltransferase superfamily.

It localises to the mitochondrion. It carries out the reaction L-lysyl-[citrate synthase] + S-adenosyl-L-methionine = N(6)-methyl-L-lysyl-[citrate synthase] + S-adenosyl-L-homocysteine + H(+). The enzyme catalyses N(6)-methyl-L-lysyl-[citrate synthase] + S-adenosyl-L-methionine = N(6),N(6)-dimethyl-L-lysyl-[citrate synthase] + S-adenosyl-L-homocysteine + H(+). The catalysed reaction is N(6),N(6)-dimethyl-L-lysyl-[citrate synthase] + S-adenosyl-L-methionine = N(6),N(6),N(6)-trimethyl-L-lysyl-[citrate synthase] + S-adenosyl-L-homocysteine + H(+). Citrate synthase-lysine methyltransferase activity is inhibited by S-adenosylhomocysteine (AdoHcy) and oxaloacetate (OAA). In terms of biological role, protein-lysine methyltransferase that selectively trimethylates citrate synthase (CS) in mitochondria. Seems to conduct trimethylation in a highly distributive manner rather than in a processive manner, and thus introduces a single methyl group per binding event. This Danio rerio (Zebrafish) protein is Citrate synthase-lysine N-methyltransferase CSKMT, mitochondrial.